The chain runs to 270 residues: Putative phosphoenolpyruvate synthase regulatory protein (270 aa).

150 to 157 is a binding site for ADP; the sequence is GVSRCGKT.

Belongs to the pyruvate, phosphate/water dikinase regulatory protein family. PSRP subfamily.

It catalyses the reaction [pyruvate, water dikinase] + ADP = [pyruvate, water dikinase]-phosphate + AMP + H(+). It carries out the reaction [pyruvate, water dikinase]-phosphate + phosphate + H(+) = [pyruvate, water dikinase] + diphosphate. Functionally, bifunctional serine/threonine kinase and phosphorylase involved in the regulation of the phosphoenolpyruvate synthase (PEPS) by catalyzing its phosphorylation/dephosphorylation. The protein is Putative phosphoenolpyruvate synthase regulatory protein of Shewanella woodyi (strain ATCC 51908 / MS32).